We begin with the raw amino-acid sequence, 244 residues long: Ribonuclease 3 (244 aa).

The region spanning 7–134 is the RNase III domain; it reads FEEVEKTLNI…IIAAIYIDSG (128 aa). Glu47 provides a ligand contact to Mg(2+). Asp51 is an active-site residue. 2 residues coordinate Mg(2+): Asn120 and Glu123. Glu123 is a catalytic residue. In terms of domain architecture, DRBM spans 161–230; that stretch reads DYKTNLQEIV…AQDALKKLKS (70 aa).

The protein belongs to the ribonuclease III family. Homodimer. Requires Mg(2+) as cofactor.

It is found in the cytoplasm. The catalysed reaction is Endonucleolytic cleavage to 5'-phosphomonoester.. Digests double-stranded RNA. Involved in the processing of primary rRNA transcript to yield the immediate precursors to the large and small rRNAs (23S and 16S). Processes some mRNAs, and tRNAs when they are encoded in the rRNA operon. Processes pre-crRNA and tracrRNA of type II CRISPR loci if present in the organism. This chain is Ribonuclease 3, found in Clostridium kluyveri (strain NBRC 12016).